The sequence spans 253 residues: MKSASKQKIIQPVDKNLDQVYQVSTMVSLLDGIYDGDFYMSEAKEHGDFGIGTFNRLDGELIGFDGEFYRLRSDGKAYPVQGSDCSPFCSLAFFRPDIYHEIKQRMPLEAFEEEMKRIMPSENLFYAIRMDGTFKKVKTRTVELQEKPYVPMVDAVKSQPIFDFNDITGTIVGFWTPQYANGIAVSGFHLHFIDEDRNVGGHVFDYEIEECTVQISQKLNMNLRLPNTQDFFQADFNKHDLAAGIEAAEGNPE.

This sequence belongs to the alpha-acetolactate decarboxylase family.

It catalyses the reaction (2S)-2-acetolactate + H(+) = (R)-acetoin + CO2. It functions in the pathway polyol metabolism; (R,R)-butane-2,3-diol biosynthesis; (R,R)-butane-2,3-diol from pyruvate: step 2/3. Its function is as follows. Converts acetolactate into acetoin. This chain is Alpha-acetolactate decarboxylase (alsD), found in Bacillus licheniformis (strain ATCC 14580 / DSM 13 / JCM 2505 / CCUG 7422 / NBRC 12200 / NCIMB 9375 / NCTC 10341 / NRRL NRS-1264 / Gibson 46).